Reading from the N-terminus, the 112-residue chain is Small ribosomal subunit protein bS6 (112 aa).

It belongs to the bacterial ribosomal protein bS6 family.

Binds together with bS18 to 16S ribosomal RNA. The sequence is that of Small ribosomal subunit protein bS6 from Hyphomonas neptunium (strain ATCC 15444).